The sequence spans 374 residues: Putative phosphoserine aminotransferase (374 aa).

Position 48 (Arg48) interacts with L-glutamate. Pyridoxal 5'-phosphate is bound by residues 82–83, Phe106, Thr152, Asp174, and Gln197; that span reads AT. N6-(pyridoxal phosphate)lysine is present on Lys198. Position 249-250 (249-250) interacts with pyridoxal 5'-phosphate; sequence NT.

The protein belongs to the class-V pyridoxal-phosphate-dependent aminotransferase family. SerC subfamily. Homodimer. The cofactor is pyridoxal 5'-phosphate.

The protein resides in the cytoplasm. The enzyme catalyses O-phospho-L-serine + 2-oxoglutarate = 3-phosphooxypyruvate + L-glutamate. It carries out the reaction 4-(phosphooxy)-L-threonine + 2-oxoglutarate = (R)-3-hydroxy-2-oxo-4-phosphooxybutanoate + L-glutamate. Its pathway is amino-acid biosynthesis; L-serine biosynthesis; L-serine from 3-phospho-D-glycerate: step 2/3. It functions in the pathway cofactor biosynthesis; pyridoxine 5'-phosphate biosynthesis; pyridoxine 5'-phosphate from D-erythrose 4-phosphate: step 3/5. Its function is as follows. Catalyzes the reversible conversion of 3-phosphohydroxypyruvate to phosphoserine and of 3-hydroxy-2-oxo-4-phosphonooxybutanoate to phosphohydroxythreonine. The chain is Putative phosphoserine aminotransferase from Mycobacterium avium (strain 104).